The primary structure comprises 415 residues: MTTRTPSSGWLSRLAQGSLVKQILIGLVLGVLLALVSKPAAIAVGLLGTLFVGALKAVAPVLVLMLVMASIANHQHGQKTSIRPILFLYLLGTFSAALTAVLFSFLFPSTLHLTTAADSITPPSGIVEVLRGLLMSMVSNPIDALLNANYIGILVWAVGLGFALRHGNDTTKNLINDVSHAVTFIVKVVIRFAPLGIFGLVSSTLATTGFETLWGYAQLLLVLVGCMLLVALVINPLLVFWKIRRNPYPLVLTCLRESGVYAFFTRSSAANIPVNMALCEKLNLDRDTYSVSIPLGATINMAGAAITITVLTLAAVHTLNIPVDLPTALLLSVVASLCACGASGVAGGSLLLIPLACNMFGIPNDVAMQVVAVGFIIGVLQDSCETALNSSTDALFTAAACMAEDDQLAKNALRG.

8 helical membrane passes run 23–43 (ILIGLVLGVLLALVSKPAAIA), 47–67 (LGTLFVGALKAVAPVLVLMLV), 85–105 (ILFLYLLGTFSAALTAVLFSF), 144–164 (ALLNANYIGILVWAVGLGFAL), 181–201 (AVTFIVKVVIRFAPLGIFGLV), 220–240 (LLVLVGCMLLVALVINPLLVF), 293–313 (IPLGATINMAGAAITITVLTL), and 333–353 (VVASLCACGASGVAGGSLLLI).

The protein belongs to the dicarboxylate/amino acid:cation symporter (DAACS) (TC 2.A.23) family.

It is found in the cell inner membrane. The catalysed reaction is L-serine(in) + Na(+)(in) = L-serine(out) + Na(+)(out). It catalyses the reaction L-threonine(in) + Na(+)(in) = L-threonine(out) + Na(+)(out). Its function is as follows. Involved in the import of serine and threonine into the cell, with the concomitant import of sodium (symport system). In Klebsiella pneumoniae subsp. pneumoniae (strain ATCC 700721 / MGH 78578), this protein is Serine/threonine transporter SstT.